Here is a 207-residue protein sequence, read N- to C-terminus: Thymidylate kinase (207 aa).

Gly-7–Ser-14 contacts ATP.

It belongs to the thymidylate kinase family.

The enzyme catalyses dTMP + ATP = dTDP + ADP. Phosphorylation of dTMP to form dTDP in both de novo and salvage pathways of dTTP synthesis. The protein is Thymidylate kinase of Chlamydia felis (strain Fe/C-56) (Chlamydophila felis).